Reading from the N-terminus, the 156-residue chain is Small ribosomal subunit protein uS7 (156 aa).

It belongs to the universal ribosomal protein uS7 family. Part of the 30S ribosomal subunit. Contacts proteins S9 and S11.

One of the primary rRNA binding proteins, it binds directly to 16S rRNA where it nucleates assembly of the head domain of the 30S subunit. Is located at the subunit interface close to the decoding center, probably blocks exit of the E-site tRNA. This is Small ribosomal subunit protein uS7 from Haemophilus influenzae (strain 86-028NP).